The sequence spans 230 residues: Sperm-associated antigen 7 homolog (230 aa).

The interval 1–45 is disordered; sequence MADLLGSILSSMEKPPTVHDQESRRKAREQAARLKKLEEDERRKK. A compositionally biased stretch (basic and acidic residues) spans 16 to 45; it reads PTVHDQESRRKAREQAARLKKLEEDERRKK. Residues 46–109 form the R3H domain; sequence AEFRKKMEKE…ESRYVMLFKK (64 aa). A compositionally biased stretch (basic and acidic residues) spans 119–144; sequence EAYRKGEEWDPQKAEERRRLKEKAAL. 2 disordered regions span residues 119 to 169 and 185 to 230; these read EAYR…KYSH and ANRA…GSSV. Position 158 is a phosphoserine (Ser-158). Residues 196–211 show a composition bias toward basic and acidic residues; the sequence is NKRDTRSIEEAMNEIR.

In Danio rerio (Zebrafish), this protein is Sperm-associated antigen 7 homolog (spag7).